Here is a 243-residue protein sequence, read N- to C-terminus: Carboxy-S-adenosyl-L-methionine synthase (243 aa).

S-adenosyl-L-methionine is bound by residues Tyr40, 65–67 (GCS), 90–91 (DN), 118–119 (DI), Asn133, and Arg200.

It belongs to the class I-like SAM-binding methyltransferase superfamily. Cx-SAM synthase family. Homodimer.

It catalyses the reaction prephenate + S-adenosyl-L-methionine = carboxy-S-adenosyl-L-methionine + 3-phenylpyruvate + H2O. Catalyzes the conversion of S-adenosyl-L-methionine (SAM) to carboxy-S-adenosyl-L-methionine (Cx-SAM). This is Carboxy-S-adenosyl-L-methionine synthase from Shewanella putrefaciens (strain CN-32 / ATCC BAA-453).